The chain runs to 264 residues: 3-methyl-2-oxobutanoate hydroxymethyltransferase (264 aa).

2 residues coordinate Mg(2+): Asp-45 and Asp-84. 3-methyl-2-oxobutanoate is bound by residues Asp-45–Ser-46, Asp-84, and Lys-112. Glu-114 is a Mg(2+) binding site. Glu-181 functions as the Proton acceptor in the catalytic mechanism.

Belongs to the PanB family. In terms of assembly, homodecamer; pentamer of dimers. The cofactor is Mg(2+).

It localises to the cytoplasm. The catalysed reaction is 3-methyl-2-oxobutanoate + (6R)-5,10-methylene-5,6,7,8-tetrahydrofolate + H2O = 2-dehydropantoate + (6S)-5,6,7,8-tetrahydrofolate. Its pathway is cofactor biosynthesis; (R)-pantothenate biosynthesis; (R)-pantoate from 3-methyl-2-oxobutanoate: step 1/2. Catalyzes the reversible reaction in which hydroxymethyl group from 5,10-methylenetetrahydrofolate is transferred onto alpha-ketoisovalerate to form ketopantoate. This Aeromonas hydrophila subsp. hydrophila (strain ATCC 7966 / DSM 30187 / BCRC 13018 / CCUG 14551 / JCM 1027 / KCTC 2358 / NCIMB 9240 / NCTC 8049) protein is 3-methyl-2-oxobutanoate hydroxymethyltransferase.